Consider the following 199-residue polypeptide: DNA repair RAD52-like protein 2, chloroplastic (199 aa).

The N-terminal 40 residues, 1–40 (MALQVQQTSAAFTISSPSTAAARIKLSPFRTVAVNRGVRC), are a transit peptide targeting the chloroplast. Ser-41 bears the N-acetylserine mark.

This sequence belongs to the RAD52 family. As to expression, expressed in roots and shoots. Expressed at low levels in cauline leaves, flower buds, flowers and siliques.

It localises to the plastid. The protein localises to the chloroplast. Functionally, involved in double-stranded DNA break repair. The chain is DNA repair RAD52-like protein 2, chloroplastic from Arabidopsis thaliana (Mouse-ear cress).